The following is a 342-amino-acid chain: Protein FinQ (342 aa).

A DNA-binding region (H-T-H motif) is located at residues R208–S227.

In terms of biological role, transcriptional inhibitor of the F plasmid transfer genes. FinQ may regulate a gene or genes encoded on the IncI plasmids, and coincidentally may inhibit F transfer when coresident. This is Protein FinQ (finQ) from Escherichia coli.